Here is a 610-residue protein sequence, read N- to C-terminus: Calmegin (610 aa).

A signal peptide spans 1 to 19 (MHFQAFWLCLGLLFISINA). The Lumenal portion of the chain corresponds to 20 to 471 (EFMDDDVETE…LMAAAEGHPW (452 aa)). Lys128 is modified (N6-acetyllysine). Cysteines 151 and 185 form a disulfide. The tract at residues 258–338 (VPPIKPPKEI…KPDDWNEDTD (81 aa)) is disordered. Residues 263 to 284 (PPKEIEDPNDKKPEEWDERAKI) show a composition bias toward basic and acidic residues. Repeat copies occupy residues 267-280 (IEDP…EWDE), 284-297 (IPDP…DWDE), 303-316 (IEDS…GWLD), 322-335 (IPDP…DWNE), 339-352 (GEWE…PACR), 356-369 (GEWK…PKYK), 370-383 (GVWR…PNYQ), and 384-397 (GIWS…PDYF). Residues 317-332 (DEPKFIPDPNAEKPDD) are compositionally biased toward basic and acidic residues. Residues 317–350 (DEPKFIPDPNAEKPDDWNEDTDGEWEAPQILNPA) form an interaction with PPIB region. Cysteines 351 and 355 form a disulfide. A helical membrane pass occupies residues 472-492 (LWLIYLVTAGVPIALITSFCW). The Cytoplasmic segment spans residues 493-610 (PRKVKKKHKD…SVRKRRVRKD (118 aa)). Residues 521–548 (QEEKEEKAALEKPMDLEEEKKQNDGEML) are compositionally biased toward basic and acidic residues. Residues 521-610 (QEEKEEKAAL…SVRKRRVRKD (90 aa)) are disordered. Residues 549 to 571 (EKEEESEPEEKSEEEIEIIEGQE) show a composition bias toward acidic residues. Phosphoserine is present on residues Ser560, Ser576, Ser579, Ser581, Ser591, Ser594, and Ser601. Residues 601–610 (SVRKRRVRKD) show a composition bias toward basic residues.

The protein belongs to the calreticulin family. Interacts with PPIB. Interacts with ADAM2. Interacts with PDILT. As to expression, detected in testis (at protein level). Detected in testis.

The protein localises to the endoplasmic reticulum membrane. Functions during spermatogenesis as a chaperone for a range of client proteins that are important for sperm adhesion onto the egg zona pellucida and for subsequent penetration of the zona pellucida. Required for normal sperm migration from the uterus into the oviduct. Required for normal male fertility. Binds calcium ions. This chain is Calmegin (CLGN), found in Homo sapiens (Human).